The chain runs to 122 residues: Immunoglobulin lambda variable 8-61 (122 aa).

A signal peptide spans 1–24; sequence MSVPTMAWMMLLLGLLAYGSGVDS. The framework-1 stretch occupies residues 25-49; the sequence is QTVVTQEPSFSVSPGGTVTLTCGLS. One can recognise an Ig-like domain in the interval 25 to 122; that stretch reads QTVVTQEPSF…YCVLYMGSGI (98 aa). C46 and C114 form a disulfide bridge. The tract at residues 50-58 is complementarity-determining-1; the sequence is SGSVSTSYY. Residues 59 to 75 are framework-2; the sequence is PSWYQQTPGQAPRTLIY. The segment at 76 to 78 is complementarity-determining-2; that stretch reads STN. The tract at residues 79–114 is framework-3; that stretch reads TRSSGVPDRFSGSILGNKAALTITGAQADDESDYYC. Residues 115–122 are complementarity-determining-3; it reads VLYMGSGI.

As to quaternary structure, immunoglobulins are composed of two identical heavy chains and two identical light chains; disulfide-linked.

The protein resides in the secreted. It is found in the cell membrane. Its function is as follows. V region of the variable domain of immunoglobulin light chains that participates in the antigen recognition. Immunoglobulins, also known as antibodies, are membrane-bound or secreted glycoproteins produced by B lymphocytes. In the recognition phase of humoral immunity, the membrane-bound immunoglobulins serve as receptors which, upon binding of a specific antigen, trigger the clonal expansion and differentiation of B lymphocytes into immunoglobulins-secreting plasma cells. Secreted immunoglobulins mediate the effector phase of humoral immunity, which results in the elimination of bound antigens. The antigen binding site is formed by the variable domain of one heavy chain, together with that of its associated light chain. Thus, each immunoglobulin has two antigen binding sites with remarkable affinity for a particular antigen. The variable domains are assembled by a process called V-(D)-J rearrangement and can then be subjected to somatic hypermutations which, after exposure to antigen and selection, allow affinity maturation for a particular antigen. The sequence is that of Immunoglobulin lambda variable 8-61 from Homo sapiens (Human).